The primary structure comprises 432 residues: Glutamyl-tRNA reductase (432 aa).

Residues 49 to 52 (TCNR), Ser-109, 114 to 116 (EGQ), and Gln-120 contribute to the substrate site. The active-site Nucleophile is the Cys-50. Position 198–203 (198–203 (GAGRMS)) interacts with NADP(+).

It belongs to the glutamyl-tRNA reductase family. As to quaternary structure, homodimer.

The enzyme catalyses (S)-4-amino-5-oxopentanoate + tRNA(Glu) + NADP(+) = L-glutamyl-tRNA(Glu) + NADPH + H(+). Its pathway is porphyrin-containing compound metabolism; protoporphyrin-IX biosynthesis; 5-aminolevulinate from L-glutamyl-tRNA(Glu): step 1/2. It functions in the pathway porphyrin-containing compound metabolism; chlorophyll biosynthesis. In terms of biological role, catalyzes the NADPH-dependent reduction of glutamyl-tRNA(Glu) to glutamate 1-semialdehyde (GSA). The chain is Glutamyl-tRNA reductase from Synechococcus sp. (strain CC9605).